Consider the following 200-residue polypeptide: Nascent polypeptide-associated complex subunit alpha (200 aa).

Basic and acidic residues predominate over residues 1 to 19 (MADPRVEELPEEEVKKTQV). Disordered stretches follow at residues 1–54 (MADP…NEKK) and 118–165 (AAQQ…EDKD). Positions 20-34 (EDLDNSSDDESDIEA) are enriched in acidic residues. Residues 49-114 (SRNEKKARKA…AKIEDLNASA (66 aa)) form the NAC-A/B domain. Residues 127–146 (AEHDHAGHTHEHEEAGKAKE) show a composition bias toward basic and acidic residues. The segment covering 147–160 (EEEEDEGEEVDAEG) has biased composition (acidic residues). Residues 161 to 200 (IEDKDIELVMTQANVSRKKAIKALKENDNDIVNSIMALSI) enclose the UBA domain.

Belongs to the NAC-alpha family. Part of the nascent polypeptide-associated complex (NAC), consisting of npc-1/egd2 and npc-2/egd1. NAC associates with ribosomes via npc-2/egd1.

The protein localises to the cytoplasm. It is found in the nucleus. Functionally, component of the nascent polypeptide-associated complex (NAC), a dynamic component of the ribosomal exit tunnel, protecting the emerging polypeptides from interaction with other cytoplasmic proteins to ensure appropriate nascent protein targeting. The NAC complex also promotes mitochondrial protein import by enhancing productive ribosome interactions with the outer mitochondrial membrane and blocks the inappropriate interaction of ribosomes translating non-secretory nascent polypeptides with translocation sites in the membrane of the endoplasmic reticulum. Npc-1/egd2 may also be involved in transcription regulation. This chain is Nascent polypeptide-associated complex subunit alpha (npc-1), found in Neurospora crassa (strain ATCC 24698 / 74-OR23-1A / CBS 708.71 / DSM 1257 / FGSC 987).